A 315-amino-acid chain; its full sequence is MTRLPILLLLISLVYATPFPQTSKKIGDDATLSCNRNNTNDYVVMSAWYKEPNSIILLAAKSDVLYFDNYTKDKISYDSPYDDLVTTITIKSLTARDAGTYVCAFFMTSTTNDTDKVDYEEYSTELIVNTDSESTIDIILSGSTHSPETSSEKPEDIDNFNCSSVFEIATPEPITDNVEDHTDTVTYTSDSINTVSASSGESTTDETPEPITDKEEDHTVTDTVSYTTVSTSSGIVTTKSTTDDADLYDTYNDNDTVPPTTVGGSTTSISNYKTKDFVEIFGITALIILSAVAIFCITYYIYNKRSRKYKTENKV.

An N-terminal signal peptide occupies residues methionine 1–alanine 16. Residues threonine 17–glutamate 121 enclose the Ig-like V-type domain. Topologically, residues threonine 17 to glutamate 279 are virion surface. Residues cysteine 34 and cysteine 103 are joined by a disulfide bond. 4 N-linked (GlcNAc...) asparagine; by host glycosylation sites follow: asparagine 37, asparagine 69, asparagine 112, and asparagine 161. The segment covering asparagine 193 to serine 202 has biased composition (polar residues). A disordered region spans residues asparagine 193–aspartate 213. N-linked (GlcNAc...) asparagine; by host glycosylation is present at asparagine 254. The helical transmembrane segment at isoleucine 280–asparagine 303 threads the bilayer. Residues lysine 304–valine 315 are Intravirion-facing.

It belongs to the orthopoxvirus OPG185 family. Heterodimerizes with OPG040. The heterodimer OPG185-OPG040 interacts with components of the entry fusion complex OPG143 and OPG094. Heterodimer with C3/VPC protein; disulfide-linked. Glycosylated; contains phosphate and sulfate-substituted glycans. O-glycosylation is required for hemagglutination and hemadsorption activities of infected cell membranes.

It localises to the virion membrane. The protein localises to the host membrane. In terms of biological role, prevents cell to cell fusion by interacting with and directing the viral OPG040 protein on the host plasma membrane. The OPG185-OPG040 complex associates with components of the entry fusion complex (EFC) presumably to avoid superinfection and syncytium formation. Via its interaction with C3/VCP protein, protects the infected cell and probably also the extracellular enveloped virus from complement attack. The sequence is that of Protein OPG185 (OPG185) from Homo sapiens (Human).